A 387-amino-acid polypeptide reads, in one-letter code: 3-ketoacyl-CoA thiolase (387 aa).

Residue C91 is the Acyl-thioester intermediate of the active site. Catalysis depends on proton acceptor residues H343 and C373.

Belongs to the thiolase-like superfamily. Thiolase family. In terms of assembly, heterotetramer of two alpha chains (FadB) and two beta chains (FadA).

The protein localises to the cytoplasm. The enzyme catalyses an acyl-CoA + acetyl-CoA = a 3-oxoacyl-CoA + CoA. It participates in lipid metabolism; fatty acid beta-oxidation. Catalyzes the final step of fatty acid oxidation in which acetyl-CoA is released and the CoA ester of a fatty acid two carbons shorter is formed. The chain is 3-ketoacyl-CoA thiolase from Aeromonas salmonicida (strain A449).